The sequence spans 849 residues: DNA mismatch repair protein MutS (849 aa).

Position 665–672 (665–672) interacts with ATP; it reads GPNMAGKS.

It belongs to the DNA mismatch repair MutS family.

Its function is as follows. This protein is involved in the repair of mismatches in DNA. It is possible that it carries out the mismatch recognition step. This protein has a weak ATPase activity. In Wolbachia pipientis wMel, this protein is DNA mismatch repair protein MutS.